Here is a 126-residue protein sequence, read N- to C-terminus: Non-specific lipid-transfer protein 15 (126 aa).

Residues 1–22 (MSKSIFVVCITLLVVLSPTLNA) form the signal peptide. 4 disulfides stabilise this stretch: C34-C80, C45-C57, C58-C100, and C78-C114.

This sequence belongs to the plant LTP family.

Functionally, plant non-specific lipid-transfer proteins transfer phospholipids as well as galactolipids across membranes. May play a role in wax or cutin deposition in the cell walls of expanding epidermal cells and certain secretory tissues. The chain is Non-specific lipid-transfer protein 15 (LTP15) from Arabidopsis thaliana (Mouse-ear cress).